Consider the following 243-residue polypeptide: Small ribosomal subunit protein uS5 (243 aa).

The interval 1 to 54 (MSDNEKETQVAEETQNTQATAESSNNDERRGRRNNRGGEGRRGDRRGRREDNHE) is disordered. Positions 11–24 (AEETQNTQATAESS) are enriched in polar residues. Residues 26–54 (NDERRGRRNNRGGEGRRGDRRGRREDNHE) show a composition bias toward basic and acidic residues. The S5 DRBM domain maps to 57-120 (MLDRVVTINR…LDAKKHLFNV (64 aa)).

This sequence belongs to the universal ribosomal protein uS5 family. As to quaternary structure, part of the 30S ribosomal subunit. Contacts proteins S4 and S8.

Functionally, with S4 and S12 plays an important role in translational accuracy. Located at the back of the 30S subunit body where it stabilizes the conformation of the head with respect to the body. The protein is Small ribosomal subunit protein uS5 of Bifidobacterium animalis subsp. lactis (strain AD011).